Reading from the N-terminus, the 660-residue chain is CXXC-type zinc finger protein 1 (660 aa).

Residue methionine 1 is modified to N-acetylmethionine. Residues 1-14 (MEGDGSDLEPPDAG) show a composition bias toward acidic residues. Residues 1–20 (MEGDGSDLEPPDAGDDSKSE) form a disordered region. Residues serine 6 and serine 19 each carry the phosphoserine modification. The segment at 28 to 76 (YCICRKPDINCFMIGCDNCNEWFHGDCIRITEKMAKAIREWYCRECREK) adopts a PHD-type zinc-finger fold. Positions 91 to 120 (ERDGSERAGSEPRDEGGGRKRPASDPELQR) are enriched in basic and acidic residues. Residues 91-166 (ERDGSERAGS…QQQQQQQQQI (76 aa)) form a disordered region. Serine 124 carries the phosphoserine modification. Residues 164-213 (QQIKRSARMCGECEACRRTEDCGHCDFCRDMKKFGGPNKIRQKCRLRQCQ) form a CXXC-type zinc finger. Residues cysteine 173, cysteine 176, cysteine 179, cysteine 185, cysteine 188, cysteine 191, cysteine 207, and cysteine 212 each coordinate Zn(2+). Disordered stretches follow at residues 223–287 (FPSS…SDED) and 328–375 (AVKV…DPAS). Serine 228 carries the post-translational modification Phosphoserine. At threonine 231 the chain carries Phosphothreonine. A Glycyl lysine isopeptide (Lys-Gly) (interchain with G-Cter in SUMO2) cross-link involves residue lysine 254. Basic residues predominate over residues 328–338 (AVKVKHVKRRE). A compositionally biased stretch (basic and acidic residues) spans 339–349 (KKSEKKKEERY). A compositionally biased stretch (basic residues) spans 350 to 362 (KRHRQKQKHKDKW). Basic and acidic residues predominate over residues 363–372 (KHPERADAKD). Residues 426–479 (AEEHGKKLLERIRREQQSARTRLQEMERRFHELEAIILRAKQQAVREDEENNEN) adopt a coiled-coil conformation.

Component of the SET1 complex, at least composed of the catalytic subunit (SETD1A or SETD1B), WDR5, WDR82, RBBP5, ASH2L/ASH2, CXXC1/CFP1, HCFC1 and DPY30. Interacts with SETD1A. Interacts with ZNF335. Interacts with PRDM9; this interaction does not link PRDM9-activated recombination hotspot sites with DSB machinery and is not required for the hotspot recognition pathway. Interacts with histone H3K4me3. Expressed in seminiferous tubules and in both germ cells and Sertoli cells. Highly expressed in spermatogonia, weakly expressed in leptonema and zygonema, and then again high expression in pachynema and diplonema, decreasing to undetectable levels in spermatids.

It is found in the nucleus speckle. Its subcellular location is the nucleus. Its function is as follows. Transcriptional activator that exhibits a unique DNA binding specificity for CpG unmethylated motifs with a preference for CpGG. This is CXXC-type zinc finger protein 1 (Cxxc1) from Mus musculus (Mouse).